A 50-amino-acid chain; its full sequence is Fungus-induced-related protein 15 (50 aa).

The N-terminal stretch at 1–21 (MNFYSLFVFIALIFSFNVVHG) is a signal peptide.

May have role in hypoxia response. In Caenorhabditis elegans, this protein is Fungus-induced-related protein 15 (fipr-15).